The sequence spans 180 residues: Superoxide dismutase [Cu-Zn] (180 aa).

The first 19 residues, 1 to 19 (MFMNLLSQVSNAIFPQVEA), serve as a signal peptide directing secretion. Positions 68, 70, and 85 each coordinate Cu cation. A disulfide bond links cysteine 79 and cysteine 171. Histidine 85, histidine 93, histidine 102, and aspartate 105 together coordinate Zn(2+). Histidine 142 contacts Cu cation.

Belongs to the Cu-Zn superoxide dismutase family. In terms of assembly, homodimer. Cu cation serves as cofactor. Zn(2+) is required as a cofactor.

It is found in the cytoplasm. It catalyses the reaction 2 superoxide + 2 H(+) = H2O2 + O2. Functionally, destroys radicals which are normally produced within the cells and which are toxic to biological systems. Required for normal brood size. May be involved in regulating mpk-1 phosphorylation downstream of phosphatase ptp-2 during oocyte maturation. This chain is Superoxide dismutase [Cu-Zn], found in Caenorhabditis briggsae.